The following is a 511-amino-acid chain: Cytochrome P450 monooxygenase PUL2 (511 aa).

The helical transmembrane segment at 14–34 threads the bilayer; it reads WMAFVYFTPVLFVVLYLLKEW. Residues Asn-116, Asn-141, and Asn-442 are each glycosylated (N-linked (GlcNAc...) asparagine). Position 462 (Cys-462) interacts with heme.

The protein belongs to the cytochrome P450 family. Heme serves as cofactor.

The protein localises to the membrane. It functions in the pathway siderophore biosynthesis. Cytochrome P450 monooxygenase; part of the PUL gene cluster that mediates the formation of pulcherrimin, a red iron-containing pigment composed of two cyclized and modified leucine molecules that acts as a siderophore, a chelator that binds iron outside the cell for subsequent uptake. Two leucine molecules are cyclized via a cyclodipeptide synthase, and the resulting diketopiperazine is oxidized by a cytochrome P450 monooxygenase to generate pulcherriminic acid (PA), which can then spontaneously bind iron to form pulcherrimin. The probable cyclodipeptide synthase PUL1 and the cytochrome P450 monooxygenase PUL2 encode the enzymes responsible for the two-step pulcherrimin biosynthesis pathway. The sequence is that of Cytochrome P450 monooxygenase PUL2 from Kluyveromyces lactis (strain ATCC 8585 / CBS 2359 / DSM 70799 / NBRC 1267 / NRRL Y-1140 / WM37) (Yeast).